Reading from the N-terminus, the 532-residue chain is Eukaryotic translation initiation factor 3 subunit D (532 aa).

Residues 108-161 (ATVLKTRGGAPRGGSFAGRGGSQRGGRFQNQPGRGPVGGQRGPNPRFGKSKFGW) form a disordered region. Gly residues predominate over residues 117–131 (APRGGSFAGRGGSQR). Residues 132–141 (GGRFQNQPGR) show a composition bias toward low complexity. The RNA gate stretch occupies residues 296 to 310 (PLDFITVDENAADPP).

The protein belongs to the eIF-3 subunit D family. Component of the eukaryotic translation initiation factor 3 (eIF-3) complex.

It is found in the cytoplasm. In terms of biological role, mRNA cap-binding component of the eukaryotic translation initiation factor 3 (eIF-3) complex, which is involved in protein synthesis of a specialized repertoire of mRNAs and, together with other initiation factors, stimulates binding of mRNA and methionyl-tRNAi to the 40S ribosome. The eIF-3 complex specifically targets and initiates translation of a subset of mRNAs involved in cell proliferation. In the eIF-3 complex, eif3d specifically recognizes and binds the 7-methylguanosine cap of a subset of mRNAs. The sequence is that of Eukaryotic translation initiation factor 3 subunit D from Yarrowia lipolytica (strain CLIB 122 / E 150) (Yeast).